The following is a 341-amino-acid chain: S-adenosylmethionine:tRNA ribosyltransferase-isomerase (341 aa).

The protein belongs to the QueA family. Monomer.

The protein localises to the cytoplasm. It carries out the reaction 7-aminomethyl-7-carbaguanosine(34) in tRNA + S-adenosyl-L-methionine = epoxyqueuosine(34) in tRNA + adenine + L-methionine + 2 H(+). Its pathway is tRNA modification; tRNA-queuosine biosynthesis. Transfers and isomerizes the ribose moiety from AdoMet to the 7-aminomethyl group of 7-deazaguanine (preQ1-tRNA) to give epoxyqueuosine (oQ-tRNA). The sequence is that of S-adenosylmethionine:tRNA ribosyltransferase-isomerase from Halothermothrix orenii (strain H 168 / OCM 544 / DSM 9562).